The chain runs to 401 residues: S-adenosylmethionine synthase (401 aa).

G137–D142 is a binding site for ATP. The interval G272 to S305 is disordered. A compositionally biased stretch (polar residues) spans N287 to S305.

It belongs to the AdoMet synthase 2 family. Mg(2+) is required as a cofactor.

The catalysed reaction is L-methionine + ATP + H2O = S-adenosyl-L-methionine + phosphate + diphosphate. It participates in amino-acid biosynthesis; S-adenosyl-L-methionine biosynthesis; S-adenosyl-L-methionine from L-methionine: step 1/1. In terms of biological role, catalyzes the formation of S-adenosylmethionine from methionine and ATP. This chain is S-adenosylmethionine synthase, found in Natronomonas pharaonis (strain ATCC 35678 / DSM 2160 / CIP 103997 / JCM 8858 / NBRC 14720 / NCIMB 2260 / Gabara) (Halobacterium pharaonis).